Reading from the N-terminus, the 150-residue chain is D-aminoacyl-tRNA deacylase (150 aa).

Residues 136–137 carry the Gly-cisPro motif, important for rejection of L-amino acids motif; sequence GP.

This sequence belongs to the DTD family. In terms of assembly, homodimer.

The protein resides in the cytoplasm. The enzyme catalyses glycyl-tRNA(Ala) + H2O = tRNA(Ala) + glycine + H(+). The catalysed reaction is a D-aminoacyl-tRNA + H2O = a tRNA + a D-alpha-amino acid + H(+). In terms of biological role, an aminoacyl-tRNA editing enzyme that deacylates mischarged D-aminoacyl-tRNAs. Also deacylates mischarged glycyl-tRNA(Ala), protecting cells against glycine mischarging by AlaRS. Acts via tRNA-based rather than protein-based catalysis; rejects L-amino acids rather than detecting D-amino acids in the active site. By recycling D-aminoacyl-tRNA to D-amino acids and free tRNA molecules, this enzyme counteracts the toxicity associated with the formation of D-aminoacyl-tRNA entities in vivo and helps enforce protein L-homochirality. The chain is D-aminoacyl-tRNA deacylase from Macrococcus caseolyticus (strain JCSC5402) (Macrococcoides caseolyticum).